Here is a 1108-residue protein sequence, read N- to C-terminus: Unconventional myosin-Ie (1108 aa).

One can recognise a Myosin motor domain in the interval 19–692; it reads SGVDDMVLLS…SLFLLEEMRE (674 aa). 112–119 is a binding site for ATP; the sequence is GESGAGKT. The segment at 581–591 is actin-binding; that stretch reads PHYIRCIKPNE. The region spanning 695-724 is the IQ domain; sequence YDGYARVIQKSWRKFVARKKYVQMREEASD. Positions 730–922 constitute a TH1 domain; that stretch reads KERRRNSINR…NKVLQVSIGP (193 aa). Residues 919 to 966 form a disordered region; it reads SIGPGLPKNSRPTRRNTTQNTGYSSGTQNANYPVRAAPPPPGYHQNGV. The segment covering 933 to 949 has biased composition (polar residues); that stretch reads RNTTQNTGYSSGTQNAN. Phosphoserine is present on residues serine 980 and serine 1002. Residues 993–1053 form a disordered region; it reads ARPPLPRQQS…KPQPKPKPQV (61 aa). Over residues 999-1013 the composition is skewed to polar residues; sequence RQQSTSSDRVSQTPE. A compositionally biased stretch (pro residues) spans 1035–1052; it reads RPPPAGGRPKPQPKPKPQ. The region spanning 1051–1108 is the SH3 domain; it reads PQVPQCKALYAYDAQDTDELSFNANDIIDIIKEDPSGWWTGRLRGKQGLFPNNYVTKI.

It belongs to the TRAFAC class myosin-kinesin ATPase superfamily. Myosin family. In terms of assembly, interacts with CALM and F-actin. Interacts (via SH3 domain) with SYNJ1, DNM1 and DNM2. Interacts with ARL14EP. Interacts with CARMIL1. As to expression, expressed in the immune system. In the kidney, predominantly expressed in the glomerulus, including podocytes.

The protein localises to the cytoplasm. Its subcellular location is the cytoskeleton. It localises to the cytoplasmic vesicle. The protein resides in the clathrin-coated vesicle. It is found in the cell junction. Functionally, actin-based motor molecule with ATPase activity. Unconventional myosins serve in intracellular movements. Their highly divergent tails bind to membranous compartments, which are then moved relative to actin filaments. Binds to membranes containing anionic phospholipids via its tail domain. Involved in clathrin-mediated endocytosis and intracellular movement of clathrin-coated vesicles. Required for normal morphology of the glomerular basement membrane, normal development of foot processes by kidney podocytes and normal kidney function. In dendritic cells, may control the movement of class II-containing cytoplasmic vesicles along the actin cytoskeleton by connecting them with the actin network via ARL14EP and ARL14. The polypeptide is Unconventional myosin-Ie (MYO1E) (Homo sapiens (Human)).